Consider the following 395-residue polypeptide: Phosphoglycerate kinase (395 aa).

Substrate contacts are provided by residues 21 to 23 (DLN), R36, 59 to 62 (HLGR), R113, and R146. Residues K197, E324, and 350-353 (GGDT) contribute to the ATP site.

It belongs to the phosphoglycerate kinase family. As to quaternary structure, monomer.

The protein resides in the cytoplasm. It carries out the reaction (2R)-3-phosphoglycerate + ATP = (2R)-3-phospho-glyceroyl phosphate + ADP. Its pathway is carbohydrate degradation; glycolysis; pyruvate from D-glyceraldehyde 3-phosphate: step 2/5. This chain is Phosphoglycerate kinase, found in Acinetobacter baylyi (strain ATCC 33305 / BD413 / ADP1).